The following is a 227-amino-acid chain: Rho-related GTP-binding protein RhoN (227 aa).

Residue 14-21 (GDAECGKT) participates in GTP binding. The Effector region signature appears at 36–44 (YVPTVFENY). GTP-binding positions include 61–65 (DTSGS) and 119–122 (CKLD). The segment at 186–227 (HRQLRRTDSRRGLQRSTQLSGRPDRGNEGEMHKDRAKSCNLM) is disordered. Residues 207-227 (RPDRGNEGEMHKDRAKSCNLM) are compositionally biased toward basic and acidic residues. Cys224 bears the Cysteine methyl ester mark. Cys224 carries S-geranylgeranyl cysteine lipidation. Residues 225–227 (NLM) constitute a propeptide, removed in mature form.

Belongs to the small GTPase superfamily. Rho family. Interacts with the Rho-GAP domain of RACGAP1. Interacts with UBXD5. Interacts with PRAG1. Expressed specifically in neurons in the brain and spinal cord and also in hepatic stellate cells.

It is found in the cytoplasmic vesicle. It localises to the secretory vesicle. The protein resides in the acrosome membrane. Functionally, may be specifically involved in neuronal and hepatic functions. Is a C3 toxin-insensitive member of the Rho subfamily. The chain is Rho-related GTP-binding protein RhoN (Rnd2) from Mus musculus (Mouse).